A 435-amino-acid chain; its full sequence is Metacaspase-1A (435 aa).

2 disordered regions span residues 1–46 (MQNH…APPP) and 106–129 (YQNPYSHGHQGGPPPPPTDPVAFG). Pro residues predominate over residues 36-46 (SPQPGYGAPPP). Residues His231 and Cys287 contribute to the active site.

It belongs to the peptidase C14B family.

Involved in cell death (apoptosis). The protein is Metacaspase-1A (casA) of Neosartorya fischeri (strain ATCC 1020 / DSM 3700 / CBS 544.65 / FGSC A1164 / JCM 1740 / NRRL 181 / WB 181) (Aspergillus fischerianus).